A 527-amino-acid chain; its full sequence is Probable protein kinase UbiB (527 aa).

In terms of domain architecture, Protein kinase spans 123-527 (EFNETALASA…AIWLLIYLLS (405 aa)). Residues 129 to 137 (LASASIAQV) and Lys161 contribute to the ATP site. The active-site Proton acceptor is Asp296. The chain crosses the membrane as a helical span at residues 506–526 (FTSFILGLCTGLAIWLLIYLL).

Belongs to the ABC1 family. UbiB subfamily.

The protein resides in the cell inner membrane. It participates in cofactor biosynthesis; ubiquinone biosynthesis [regulation]. Is probably a protein kinase regulator of UbiI activity which is involved in aerobic coenzyme Q (ubiquinone) biosynthesis. The protein is Probable protein kinase UbiB of Pasteurella multocida (strain Pm70).